The chain runs to 835 residues: Leucine--tRNA ligase (835 aa).

The short motif at 36-46 is the 'HIGH' region element; sequence PYPSGKIHVGH. Residues 602–606 carry the 'KMSKS' region motif; it reads KMSKS. An ATP-binding site is contributed by Lys605.

This sequence belongs to the class-I aminoacyl-tRNA synthetase family.

The protein localises to the cytoplasm. It carries out the reaction tRNA(Leu) + L-leucine + ATP = L-leucyl-tRNA(Leu) + AMP + diphosphate. The polypeptide is Leucine--tRNA ligase (Rickettsia rickettsii (strain Iowa)).